We begin with the raw amino-acid sequence, 640 residues long: UvrABC system protein C (640 aa).

One can recognise a GIY-YIG domain in the interval Asn-22 to Val-101. Positions Asp-211–Leu-246 constitute a UVR domain.

The protein belongs to the UvrC family. Interacts with UvrB in an incision complex.

The protein localises to the cytoplasm. Its function is as follows. The UvrABC repair system catalyzes the recognition and processing of DNA lesions. UvrC both incises the 5' and 3' sides of the lesion. The N-terminal half is responsible for the 3' incision and the C-terminal half is responsible for the 5' incision. The protein is UvrABC system protein C of Prochlorococcus marinus (strain NATL1A).